Consider the following 331-residue polypeptide: High-affinity nickel-transport protein NixA (331 aa).

Transmembrane regions (helical) follow at residues 3-23 (LWFP…ALLF), 77-97 (MGHS…IAWA), 110-130 (VVGT…NAII), 184-204 (PVGF…LLAL), 213-233 (VVGM…FDTL), 259-279 (ITAL…FQVI), and 302-322 (DLGY…FFLW).

The protein belongs to the NiCoT transporter (TC 2.A.52) family.

The protein resides in the cell inner membrane. In terms of biological role, high-affinity nickel intake protein. Imports nickel ions in an energy-dependent fashion. Necessary for the expression of catalytically active urease. The chain is High-affinity nickel-transport protein NixA (nixA) from Helicobacter pylori (strain J99 / ATCC 700824) (Campylobacter pylori J99).